The primary structure comprises 107 residues: uncharacterized protein (107 aa).

Residues 86–107 (QVSNHEEDADVLETQDDNAEQV) form a disordered region. Positions 92–107 (EDADVLETQDDNAEQV) are enriched in acidic residues.

This is an uncharacterized protein from Rickettsia prowazekii (strain Madrid E).